A 418-amino-acid polypeptide reads, in one-letter code: Gamma-glutamyl phosphate reductase (418 aa).

Belongs to the gamma-glutamyl phosphate reductase family.

Its subcellular location is the cytoplasm. The enzyme catalyses L-glutamate 5-semialdehyde + phosphate + NADP(+) = L-glutamyl 5-phosphate + NADPH + H(+). It participates in amino-acid biosynthesis; L-proline biosynthesis; L-glutamate 5-semialdehyde from L-glutamate: step 2/2. In terms of biological role, catalyzes the NADPH-dependent reduction of L-glutamate 5-phosphate into L-glutamate 5-semialdehyde and phosphate. The product spontaneously undergoes cyclization to form 1-pyrroline-5-carboxylate. The chain is Gamma-glutamyl phosphate reductase from Lacticaseibacillus casei (strain BL23) (Lactobacillus casei).